The sequence spans 193 residues: Large ribosomal subunit protein eL18 (193 aa).

Residues 158–193 (HFGAAGVPGSHAKPFTSNRGKERQRSSARRRAFRHK) are disordered. The segment covering 183–193 (SSARRRAFRHK) has biased composition (basic residues).

It belongs to the eukaryotic ribosomal protein eL18 family.

The protein localises to the cytoplasm. The polypeptide is Large ribosomal subunit protein eL18 (RPL18) (Trypanosoma cruzi (strain CL Brener)).